A 179-amino-acid polypeptide reads, in one-letter code: Large ribosomal subunit protein uL5 (179 aa).

This sequence belongs to the universal ribosomal protein uL5 family. In terms of assembly, part of the 50S ribosomal subunit; part of the 5S rRNA/L5/L18/L25 subcomplex. Contacts the 5S rRNA and the P site tRNA. Forms a bridge to the 30S subunit in the 70S ribosome.

This is one of the proteins that bind and probably mediate the attachment of the 5S RNA into the large ribosomal subunit, where it forms part of the central protuberance. In the 70S ribosome it contacts protein S13 of the 30S subunit (bridge B1b), connecting the 2 subunits; this bridge is implicated in subunit movement. Contacts the P site tRNA; the 5S rRNA and some of its associated proteins might help stabilize positioning of ribosome-bound tRNAs. The sequence is that of Large ribosomal subunit protein uL5 from Pseudomonas putida (strain ATCC 700007 / DSM 6899 / JCM 31910 / BCRC 17059 / LMG 24140 / F1).